The primary structure comprises 102 residues: Cell division topological specificity factor (102 aa).

It belongs to the MinE family.

Prevents the cell division inhibition by proteins MinC and MinD at internal division sites while permitting inhibition at polar sites. This ensures cell division at the proper site by restricting the formation of a division septum at the midpoint of the long axis of the cell. The chain is Cell division topological specificity factor from Synechococcus sp. (strain CC9605).